Here is a 338-residue protein sequence, read N- to C-terminus: Phenylalanine--tRNA ligase alpha subunit (338 aa).

E252 is a Mg(2+) binding site.

This sequence belongs to the class-II aminoacyl-tRNA synthetase family. Phe-tRNA synthetase alpha subunit type 1 subfamily. Tetramer of two alpha and two beta subunits. It depends on Mg(2+) as a cofactor.

The protein resides in the cytoplasm. The enzyme catalyses tRNA(Phe) + L-phenylalanine + ATP = L-phenylalanyl-tRNA(Phe) + AMP + diphosphate + H(+). This chain is Phenylalanine--tRNA ligase alpha subunit, found in Pseudomonas fluorescens (strain SBW25).